Here is a 318-residue protein sequence, read N- to C-terminus: NADH-ubiquinone oxidoreductase chain 1 (318 aa).

The next 8 membrane-spanning stretches (helical) occupy residues 3-23 (LINL…LTLL), 69-89 (MLFI…WTPL), 102-122 (MLFI…SGWA), 144-164 (VTLA…TLLS), 171-191 (YIWL…STLA), 222-242 (LFFL…IILF), 253-273 (ELYT…FLWI), and 294-314 (LPLT…LAGI).

Belongs to the complex I subunit 1 family. As to quaternary structure, core subunit of respiratory chain NADH dehydrogenase (Complex I) which is composed of 45 different subunits.

The protein localises to the mitochondrion inner membrane. It carries out the reaction a ubiquinone + NADH + 5 H(+)(in) = a ubiquinol + NAD(+) + 4 H(+)(out). Functionally, core subunit of the mitochondrial membrane respiratory chain NADH dehydrogenase (Complex I) which catalyzes electron transfer from NADH through the respiratory chain, using ubiquinone as an electron acceptor. Essential for the catalytic activity and assembly of complex I. This is NADH-ubiquinone oxidoreductase chain 1 (MT-ND1) from Murina florium (Flores tube-nosed bat).